The chain runs to 576 residues: Keratin, type II cytoskeletal 5 (576 aa).

The segment at 1-163 (MSRQSSVSFR…DPTIQRVRTE (163 aa)) is head. 4 positions are modified to phosphoserine: S5, S8, S16, and S21. Residue T24 is modified to Phosphothreonine; by CDK1. A phosphoserine mark is found at S26, S36, S46, S60, S67, S71, S74, and S78. Phosphothreonine; by CDK1 is present on T147. T162 bears the Phosphothreonine; by AURKB mark. Positions 164–199 (EREQIKTLNNKFASFIDKVRFLEQQNKVLDTKWTLL) are coil 1A. One can recognise an IF rod domain in the interval 164–477 (EREQIKTLNN…KLLEGEECRL (314 aa)). The interval 200 to 218 (QEQGTKTIKQNLDPLFEQY) is linker 1. The coil 1B stretch occupies residues 219–311 (INNLRRQLDG…FFDAELSQMQ (93 aa)). Positions 312–334 (THVSDTSVVLSMDNNRSLDLDSI) are linker 12. The segment at 335–473 (IAEVKAQYED…ATYRKLLEGE (139 aa)) is coil 2. The interval 474-576 (ECRLSGEGVG…TSSSRRSFKS (103 aa)) is tail. Position 527 is an omega-N-methylarginine (R527). Gly residues predominate over residues 540 to 557 (GFSASSGQGGGFSSGGGS). The interval 540–576 (GFSASSGQGGGFSSGGGSSSSVKFVSTTSSSRRSFKS) is disordered. Over residues 558–576 (SSSVKFVSTTSSSRRSFKS) the composition is skewed to low complexity.

This sequence belongs to the intermediate filament family. Heterodimer of a type I and a type II keratin. Heterodimer with type I keratin KRT25 leading to the formation of keratin intermediate filament (KIF) network. Forms a heterodimer (via 2B domains) with KRT14 (via 2B domains). Interacts with TCHP. Interacts with EPPK1. Interacts with AMELX. Interacts with PKP1 (via N-terminus) and PKP2. In terms of processing, phosphorylated by CDK1, AURKB and Rho-kinase, phosphorylation is regulated by the cell cycle. Thr-24 phosphorylation, mediated by CDK1, peaks during prometaphase or metaphase cells with phosphorylated filamentous structures evident throughout the cytoplasm during early mitosis. CDK1 phosphorylates Thr-24 in mitotic cells at the site of injury. O-glycosylated. Expressed in the epidermis (at protein level) and testis (within pachytene spermatocytes).

It localises to the cytoplasm. In terms of biological role, required for the formation of keratin intermediate filaments in the basal epidermis and maintenance of the skin barrier in response to mechanical stress. Regulates the recruitment of Langerhans cells to the epidermis, potentially by modulation of the abundance of macrophage chemotactic cytokines, macrophage inflammatory cytokines and CTNND1 localization in keratinocytes. The protein is Keratin, type II cytoskeletal 5 of Rattus norvegicus (Rat).